We begin with the raw amino-acid sequence, 347 residues long: Selenide, water dikinase (347 aa).

Selenocysteine 17 is an active-site residue. Residue selenocysteine 17 is a non-standard amino acid, selenocysteine. ATP is bound by residues lysine 20 and 48-50 (TAD). Aspartate 51 contacts Mg(2+). ATP contacts are provided by residues aspartate 68, aspartate 91, and 139–141 (GHS). Aspartate 91 is a Mg(2+) binding site. Residue aspartate 227 coordinates Mg(2+).

The protein belongs to the selenophosphate synthase 1 family. Class I subfamily. In terms of assembly, homodimer. Mg(2+) is required as a cofactor.

It carries out the reaction hydrogenselenide + ATP + H2O = selenophosphate + AMP + phosphate + 2 H(+). Its function is as follows. Synthesizes selenophosphate from selenide and ATP. The sequence is that of Selenide, water dikinase from Haemophilus influenzae (strain 86-028NP).